Reading from the N-terminus, the 836-residue chain is Subtilisin-like protease PIMMS2 (836 aa).

Active-site charge relay system residues include Asp-155, His-222, and Ser-414. A disordered region spans residues 802 to 836 (EKKNKYNNSVLKRNEMKSHNNSQKTPKIIPRKYSR).

Belongs to the peptidase S8 family.

It is found in the cell membrane. It catalyses the reaction Hydrolysis of proteins with broad specificity for peptide bonds, and a preference for a large uncharged residue in P1. Hydrolyzes peptide amides.. Functionally, probable serine protease which plays a role in ookinete traversal of the mosquito host midgut epithelium. This Plasmodium berghei (strain Anka) protein is Subtilisin-like protease PIMMS2.